The following is an 86-amino-acid chain: Putative sodium channel toxin Ts17 (86 aa).

An N-terminal signal peptide occupies residues 1–19 (MNYFIFLVVACLLTAGTEG). Positions 21-82 (KDGYPVEGDN…EPTKTSGRCK (62 aa)) constitute an LCN-type CS-alpha/beta domain. Cystine bridges form between Cys-31-Cys-81, Cys-35-Cys-57, Cys-43-Cys-64, and Cys-47-Cys-66. Pro-83 carries the post-translational modification Proline amide.

The protein belongs to the long (4 C-C) scorpion toxin superfamily. Sodium channel inhibitor family. Alpha subfamily. In terms of tissue distribution, expressed by the venom gland.

The protein resides in the secreted. Functionally, alpha toxins bind voltage-independently at site-3 of sodium channels (Nav) and inhibit the inactivation of the activated channels, thereby blocking neuronal transmission. This is Putative sodium channel toxin Ts17 from Tityus serrulatus (Brazilian scorpion).